Consider the following 542-residue polypeptide: MFS thioclapurine efflux transporter tcpA (542 aa).

A compositionally biased stretch (basic and acidic residues) spans 1–10; the sequence is MATVGTEEKN. The tract at residues 1 to 24 is disordered; that stretch reads MATVGTEEKNPIGSASNTAEPNVT. The span at 13-24 shows a compositional bias: polar residues; the sequence is GSASNTAEPNVT. N-linked (GlcNAc...) asparagine glycosylation is present at Asn22. The next 3 helical transmembrane spans lie at 32 to 52, 75 to 97, and 103 to 123; these read SGFK…LCGL, GWYT…KLYT, and MILL…AAAP. Residue Asn124 is glycosylated (N-linked (GlcNAc...) asparagine). The next 6 membrane-spanning stretches (helical) occupy residues 133 to 153, 161 to 181, 193 to 213, 234 to 254, 265 to 285, and 307 to 327; these read AIAG…LVHA, ALLG…PFIG, CFII…FFVF, IPEI…LQWG, IIAL…LQVL, and IFAL…PIYF. Asn332 carries an N-linked (GlcNAc...) asparagine glycan. The chain crosses the membrane as a helical span at residues 339–359; it reads GVNVMPLILGFLVMSIISGVI. An N-linked (GlcNAc...) asparagine glycan is attached at Asn361. The next 4 membrane-spanning stretches (helical) occupy residues 370-390, 396-416, 427-447, and 500-520; these read MFLC…FDVG, WIGY…QPIV, VPFG…IFVA, and VLGQ…LGSL.

The protein belongs to the major facilitator superfamily.

Its subcellular location is the cell membrane. Its function is as follows. MFS efflux transporter probably involved in thioclapurine export. The sequence is that of MFS thioclapurine efflux transporter tcpA from Claviceps purpurea (strain 20.1) (Ergot fungus).